The following is a 306-amino-acid chain: Pantothenate kinase (306 aa).

91–98 serves as a coordination point for ATP; it reads GSVAVGKS.

It belongs to the prokaryotic pantothenate kinase family.

The protein localises to the cytoplasm. The catalysed reaction is (R)-pantothenate + ATP = (R)-4'-phosphopantothenate + ADP + H(+). It functions in the pathway cofactor biosynthesis; coenzyme A biosynthesis; CoA from (R)-pantothenate: step 1/5. This is Pantothenate kinase from Streptococcus suis (strain 05ZYH33).